A 408-amino-acid chain; its full sequence is CCA-adding enzyme (408 aa).

2 residues coordinate ATP: Gly8 and Arg11. 2 residues coordinate CTP: Gly8 and Arg11. Mg(2+)-binding residues include Glu21 and Asp23. The ATP site is built by Arg91, Arg137, and Arg140. Positions 91, 137, and 140 each coordinate CTP. Residues Thr226–Trp329 enclose the HD domain.

Belongs to the tRNA nucleotidyltransferase/poly(A) polymerase family. Bacterial CCA-adding enzyme type 2 subfamily. Requires Mg(2+) as cofactor.

It catalyses the reaction a tRNA precursor + 2 CTP + ATP = a tRNA with a 3' CCA end + 3 diphosphate. The catalysed reaction is a tRNA with a 3' CCA end + 2 CTP + ATP = a tRNA with a 3' CCACCA end + 3 diphosphate. In terms of biological role, catalyzes the addition and repair of the essential 3'-terminal CCA sequence in tRNAs without using a nucleic acid template. Adds these three nucleotides in the order of C, C, and A to the tRNA nucleotide-73, using CTP and ATP as substrates and producing inorganic pyrophosphate. tRNA 3'-terminal CCA addition is required both for tRNA processing and repair. Also involved in tRNA surveillance by mediating tandem CCA addition to generate a CCACCA at the 3' terminus of unstable tRNAs. While stable tRNAs receive only 3'-terminal CCA, unstable tRNAs are marked with CCACCA and rapidly degraded. This chain is CCA-adding enzyme, found in Blochmanniella pennsylvanica (strain BPEN).